Here is a 428-residue protein sequence, read N- to C-terminus: Leucine-rich repeat-containing protein 42 (428 aa).

LRR repeat units lie at residues 149 to 170 (VLCSLCLRNRYLVISEKLEEIK), 174 to 195 (ELTCLDLSCCKLGDEHELLEHL), 202 to 222 (SVTQLHLKDNCLSDAGVRKMT), 234 to 255 (NLTLLDLSCNPEITDAGIGYLF), and 259 to 280 (KLNCLDISGTGLKDIKTVKHKL). Residues 379–412 (KHEAISSQESKKSKKRPFEESETEQNNSSQPSKQ) are disordered. A phosphoserine mark is found at S406 and S407.

The protein belongs to the LRRC42 family.

This chain is Leucine-rich repeat-containing protein 42 (LRRC42), found in Homo sapiens (Human).